The primary structure comprises 261 residues: uncharacterized protein (261 aa).

The N-terminal stretch at 1-22 is a signal peptide; the sequence is MKYYGKCISYISILILTFFIGG. A lipid anchor (N-palmitoyl cysteine) is attached at cysteine 23. A lipid anchor (S-diacylglycerol cysteine) is attached at cysteine 23.

The protein belongs to the staphylococcal tandem lipoprotein family.

It localises to the cell membrane. This is an uncharacterized protein from Staphylococcus epidermidis (strain ATCC 12228 / FDA PCI 1200).